The sequence spans 400 residues: Spaetzle-processing enzyme (400 aa).

An N-terminal signal peptide occupies residues 1–27 (MASTERNFLLLSLVVSALSGLVHRSDA). One can recognise a Clip domain in the interval 34 to 94 (SCTPQQSDER…GLVNRILVCC (61 aa)). 6 cysteine pairs are disulfide-bonded: C35–C93, C46–C77, C52–C94, C127–C269, C166–C182, and C211–C221. In terms of domain architecture, Peptidase S1 spans 135–399 (IFGGTNTTLW…FIDWIKQKLE (265 aa)). An N-linked (GlcNAc...) asparagine glycan is attached at N140. The Charge relay system role is filled by H181. Ca(2+)-binding residues include E202, D204, T207, and D210. Catalysis depends on D249, which acts as the Charge relay system. N-linked (GlcNAc...) asparagine glycosylation is present at N311. 2 disulfides stabilise this stretch: C315/C332 and C342/C375. The active-site Charge relay system is the S346.

This sequence belongs to the peptidase S1 family. CLIP subfamily. As to quaternary structure, in the active form, heterodimer of a light chain and a heavy chain; disulfide-linked. Proteolytically cleaved in response to Gram-negative bacterial or fungal infection; processing is likely to result in its activation. Cleavage produces a light chain containing the CLIP domain and a catalytic heavy chain which remain covalently associated through an interchain disulfide bond.

The protein localises to the secreted. Endopeptidase which plays a key role in innate immunity by cleaving Tl ligand spz and thereby activating the Toll pathway in response to fungal and Gram-positive bacterial infections. Acts downstream of pathogen recognition receptors PGRP-SA and GNBP1 and protease grass in response to Gram-positive bacterial infection. Acts downstream of protease psh in response to fungal infection. This Drosophila melanogaster (Fruit fly) protein is Spaetzle-processing enzyme.